A 147-amino-acid polypeptide reads, in one-letter code: Probable WRKY transcription factor 45 (147 aa).

The disordered stretch occupies residues 21-52; sequence TEFHGVDNSAQPTTSSEEKPRSKKKKKEREAR. A DNA-binding region (WRKY) is located at residues 59-124; sequence SQVDILDDGY…YQGVHTHAVD (66 aa). Zn(2+) contacts are provided by Cys-90, Cys-95, His-119, and His-121.

This sequence belongs to the WRKY group I family.

It is found in the nucleus. Transcription factor. Interacts specifically with the W box (5'-(T)TGAC[CT]-3'), a frequently occurring elicitor-responsive cis-acting element. The chain is Probable WRKY transcription factor 45 (WRKY45) from Arabidopsis thaliana (Mouse-ear cress).